The chain runs to 758 residues: 5-methyltetrahydropteroyltriglutamate--homocysteine methyltransferase (758 aa).

5-methyltetrahydropteroyltri-L-glutamate contacts are provided by residues 17–20 (RELK) and Lys-117. L-homocysteine is bound by residues 434–436 (IGS) and Glu-487. Residues 434–436 (IGS) and Glu-487 each bind L-methionine. Residues 518–519 (RC) and Trp-564 each bind 5-methyltetrahydropteroyltri-L-glutamate. Asp-602 provides a ligand contact to L-homocysteine. Asp-602 is a binding site for L-methionine. Residue Glu-608 coordinates 5-methyltetrahydropteroyltri-L-glutamate. His-644, Cys-646, and Glu-668 together coordinate Zn(2+). Residue His-697 is the Proton donor of the active site. Zn(2+) is bound at residue Cys-729.

Belongs to the vitamin-B12 independent methionine synthase family. It depends on Zn(2+) as a cofactor.

It carries out the reaction 5-methyltetrahydropteroyltri-L-glutamate + L-homocysteine = tetrahydropteroyltri-L-glutamate + L-methionine. Its pathway is amino-acid biosynthesis; L-methionine biosynthesis via de novo pathway; L-methionine from L-homocysteine (MetE route): step 1/1. Catalyzes the transfer of a methyl group from 5-methyltetrahydrofolate to homocysteine resulting in methionine formation. The chain is 5-methyltetrahydropteroyltriglutamate--homocysteine methyltransferase from Yersinia pseudotuberculosis serotype I (strain IP32953).